Consider the following 439-residue polypeptide: MWVALKRFGFLSGLLALTVLSACSAFRKPDKFEGYYINNIPGSAEIDHANYDLTFFLGFFNRIEKTEKDKSQIDFGSIHGTGWLIDWKEVDKKDKKANKFTVYLATNLHVIQALKNREDHPPYNQFDINFVRTVDFRIGKYTDVKQFVAPSKLGLPNSTQAFVAAQPTVLPKTAFIAHDFVNYTLSKDQKNKKQREQQWKVQIKPNKDEVHPYADSAVLELPLFLNNSSDRQIFDHFIQPAIRAYKQLGDSLNIFAYPTLDQFKHSHYYVLGYPYIAKKLPTLFVNQTGKEKTVPGETAQIPNDQPFVSTINEEGPHLGRIKSDKFNGGTWAWNHDNTKNFPFNRQFRGKEYQMYGKGIGITNGSLSRGASGSLVLNNKRQIVAIYFASRITETQEWGLAQLLRWKPRSVLNEEKDSVAYDLIFGNSNTKKYYAQFAKK.

An N-terminal signal peptide occupies residues Met-1 to Ala-22. Cys-23 carries the N-palmitoyl cysteine lipid modification. Cys-23 is lipidated: S-diacylglycerol cysteine.

This sequence belongs to the MG067/MG068/MG395 family.

The protein localises to the cell membrane. This is an uncharacterized protein from Mycoplasma pneumoniae (strain ATCC 29342 / M129 / Subtype 1) (Mycoplasmoides pneumoniae).